The primary structure comprises 672 residues: Threonine--tRNA ligase (672 aa).

Residues 1-64 (MTELLKISLP…EGDAELALIT (64 aa)) form the TGS domain. The interval 257-566 (DHRKLGREMD…LIEHFAGRLP (310 aa)) is catalytic. Residues Cys-362, His-413, and His-543 each contribute to the Zn(2+) site.

It belongs to the class-II aminoacyl-tRNA synthetase family. As to quaternary structure, homodimer. It depends on Zn(2+) as a cofactor.

The protein localises to the cytoplasm. It catalyses the reaction tRNA(Thr) + L-threonine + ATP = L-threonyl-tRNA(Thr) + AMP + diphosphate + H(+). Its function is as follows. Catalyzes the attachment of threonine to tRNA(Thr) in a two-step reaction: L-threonine is first activated by ATP to form Thr-AMP and then transferred to the acceptor end of tRNA(Thr). Also edits incorrectly charged L-seryl-tRNA(Thr). This chain is Threonine--tRNA ligase, found in Erythrobacter litoralis (strain HTCC2594).